The sequence spans 280 residues: Ribosomal RNA small subunit methyltransferase I (280 aa).

Belongs to the methyltransferase superfamily. RsmI family.

It localises to the cytoplasm. The catalysed reaction is cytidine(1402) in 16S rRNA + S-adenosyl-L-methionine = 2'-O-methylcytidine(1402) in 16S rRNA + S-adenosyl-L-homocysteine + H(+). Its function is as follows. Catalyzes the 2'-O-methylation of the ribose of cytidine 1402 (C1402) in 16S rRNA. The sequence is that of Ribosomal RNA small subunit methyltransferase I from Rickettsia prowazekii (strain Madrid E).